Here is an 860-residue protein sequence, read N- to C-terminus: Leucine--tRNA ligase (860 aa).

Positions 42–52 (PYPSGRLHMGH) match the 'HIGH' region motif. A 'KMSKS' region motif is present at residues 619–623 (KMSKS). Position 622 (Lys622) interacts with ATP.

The protein belongs to the class-I aminoacyl-tRNA synthetase family.

The protein resides in the cytoplasm. It carries out the reaction tRNA(Leu) + L-leucine + ATP = L-leucyl-tRNA(Leu) + AMP + diphosphate. The sequence is that of Leucine--tRNA ligase from Salmonella typhimurium (strain LT2 / SGSC1412 / ATCC 700720).